A 316-amino-acid polypeptide reads, in one-letter code: L-lactate dehydrogenase 3 (316 aa).

4 residues coordinate NAD(+): Val-16, Asp-37, Arg-42, and Tyr-68. Arg-91 serves as a coordination point for substrate. NAD(+) is bound by residues Ser-104, 121–123, and Thr-146; that span reads ASN. 123-126 lines the substrate pocket; sequence NPVD. 151 to 154 contributes to the substrate binding site; it reads DSSR. 2 residues coordinate beta-D-fructose 1,6-bisphosphate: Arg-156 and His-171. His-178 (proton acceptor) is an active-site residue. Residue Thr-233 coordinates substrate.

The protein belongs to the LDH/MDH superfamily. LDH family. In terms of assembly, homotetramer.

It localises to the cytoplasm. The enzyme catalyses (S)-lactate + NAD(+) = pyruvate + NADH + H(+). The protein operates within fermentation; pyruvate fermentation to lactate; (S)-lactate from pyruvate: step 1/1. Its activity is regulated as follows. Allosterically activated by fructose 1,6-bisphosphate (FBP). Its function is as follows. Catalyzes the conversion of lactate to pyruvate. The sequence is that of L-lactate dehydrogenase 3 from Bacillus anthracis.